Consider the following 271-residue polypeptide: Probable ribosomal RNA small subunit methyltransferase A (271 aa).

Residues N22, L24, G49, E70, D97, and N112 each contribute to the S-adenosyl-L-methionine site.

Belongs to the class I-like SAM-binding methyltransferase superfamily. rRNA adenine N(6)-methyltransferase family. RsmA subfamily.

The protein resides in the cytoplasm. Specifically dimethylates two adjacent adenosines in the loop of a conserved hairpin near the 3'-end of 16S rRNA in the 30S particle. May play a critical role in biogenesis of 30S subunits. In Methanosphaera stadtmanae (strain ATCC 43021 / DSM 3091 / JCM 11832 / MCB-3), this protein is Probable ribosomal RNA small subunit methyltransferase A.